Consider the following 161-residue polypeptide: Large ribosomal subunit protein bL17 (161 aa).

Positions 126–161 (TAAKKAPKTRRSRKKATASVAEAPTAEAASEEKAAE) are disordered. Residues 130-141 (KAPKTRRSRKKA) are compositionally biased toward basic residues. Residues 142–153 (TASVAEAPTAEA) show a composition bias toward low complexity.

The protein belongs to the bacterial ribosomal protein bL17 family. As to quaternary structure, part of the 50S ribosomal subunit. Contacts protein L32.

The chain is Large ribosomal subunit protein bL17 from Parabacteroides distasonis (strain ATCC 8503 / DSM 20701 / CIP 104284 / JCM 5825 / NCTC 11152).